The chain runs to 158 residues: Ribosome maturation factor RimP (158 aa).

It belongs to the RimP family.

The protein localises to the cytoplasm. Its function is as follows. Required for maturation of 30S ribosomal subunits. The sequence is that of Ribosome maturation factor RimP from Aquifex aeolicus (strain VF5).